Reading from the N-terminus, the 103-residue chain is Iron-sulfur cluster assembly protein CyaY (103 aa).

The protein belongs to the frataxin family.

Functionally, involved in iron-sulfur (Fe-S) cluster assembly. May act as a regulator of Fe-S biogenesis. The polypeptide is Iron-sulfur cluster assembly protein CyaY (Rickettsia peacockii (strain Rustic)).